Here is a 964-residue protein sequence, read N- to C-terminus: Adhesion defective protein 3 (964 aa).

A disordered region spans residues 1–32 (MADFMDIEPSSHSAKASQYESSAPASSSLGNS). Positions 16-32 (ASQYESSAPASSSLGNS) are enriched in low complexity. Residues 34-66 (PNESLDYYIYDYFVKHNFEEAAQAFLRESKIQI) form the LisH domain. Over residues 69–83 (SSSSTAFSPSNNNAP) the composition is skewed to low complexity. Disordered regions lie at residues 69–125 (SSSS…EETN), 241–273 (PKGT…PASA), 476–523 (VSMK…TSRM), 572–596 (QTLS…MSMD), and 664–914 (APMI…KPIS). Composition is skewed to polar residues over residues 93-103 (LASPSKISESI), 261-270 (AMQNPHNSFP), and 508-523 (TQAN…TSRM). Low complexity predominate over residues 575 to 589 (SSGNQPPQQSGPNPN). Polar residues-rich tracts occupy residues 664–700 (APMI…TNRN), 707–716 (SPHQQFSPSA), 724–752 (RSMS…QNKE), 767–801 (AFPQ…SSLH), 818–828 (TIRTTERSTFS), and 857–868 (GGTNSISQDTTQ). The segment covering 869-885 (SLQMQSNSVNSSSMVDA) has biased composition (low complexity). A compositionally biased stretch (polar residues) spans 894–905 (GDTSALDSNAKN).

It belongs to the FLO8 family.

Its subcellular location is the cytoplasm. It localises to the nucleus. In terms of biological role, probable transcriptional regulator involved in cell adhesion. This chain is Adhesion defective protein 3 (adn3), found in Schizosaccharomyces pombe (strain 972 / ATCC 24843) (Fission yeast).